A 220-amino-acid polypeptide reads, in one-letter code: Inner membrane-spanning protein YciB (220 aa).

The next 6 helical transmembrane spans lie at 20–40, 57–77, 86–106, 123–143, 156–176, and 187–207; these read EVPPLLKLALELGPLLVFFFA, IGAPIFLATALFMAATVIALA, LPIMPLVSGIVVLVFGALTLW, LFGGILLGGLFFGKSLLGYVF, KLTLRWGLFFIFLAIVNEIVW, and FKVWGIMPITIVFTLLQMPLI.

Belongs to the YciB family.

The protein localises to the cell inner membrane. Its function is as follows. Plays a role in cell envelope biogenesis, maintenance of cell envelope integrity and membrane homeostasis. The sequence is that of Inner membrane-spanning protein YciB from Brucella abortus (strain S19).